Consider the following 97-residue polypeptide: uncharacterized protein (97 aa).

To M.thermoautotrophicum MTH1236.

This is an uncharacterized protein from Methanocaldococcus jannaschii (strain ATCC 43067 / DSM 2661 / JAL-1 / JCM 10045 / NBRC 100440) (Methanococcus jannaschii).